The primary structure comprises 734 residues: DNA replication licensing factor MCM5 (734 aa).

Serine 2 bears the N-acetylserine mark. In terms of domain architecture, MCM spans 331–537 (IYELISKSIA…RDVMLAKHVI (207 aa)). Residue arginine 371 participates in ADP binding. An N6-acetyllysine mark is found at lysine 392 and lysine 396. An Arginine finger motif is present at residues 512 to 515 (SRFD). Residue serine 605 is modified to Phosphoserine.

It belongs to the MCM family. Component of the MCM2-7 complex. The complex forms a toroidal hexameric ring with the proposed subunit order MCM2-MCM6-MCM4-MCM7-MCM3-MCM5. Component of the CMG helicase complex, a hexameric ring of related MCM2-7 subunits stabilized by CDC45 and the tetrameric GINS complex. Interacts with ANKRD17. Interacts with MCMBP. Interacts with TONSL; the interaction is direct.

Its subcellular location is the nucleus. It is found in the chromosome. It localises to the cytoplasm. The protein localises to the cytosol. It carries out the reaction ATP + H2O = ADP + phosphate + H(+). Its function is as follows. Acts as a component of the MCM2-7 complex (MCM complex) which is the replicative helicase essential for 'once per cell cycle' DNA replication initiation and elongation in eukaryotic cells. Core component of CDC45-MCM-GINS (CMG) helicase, the molecular machine that unwinds template DNA during replication, and around which the replisome is built. The active ATPase sites in the MCM2-7 ring are formed through the interaction surfaces of two neighboring subunits such that a critical structure of a conserved arginine finger motif is provided in trans relative to the ATP-binding site of the Walker A box of the adjacent subunit. The six ATPase active sites, however, are likely to contribute differentially to the complex helicase activity. In Bos taurus (Bovine), this protein is DNA replication licensing factor MCM5.